A 150-amino-acid polypeptide reads, in one-letter code: 3-hydroxyacyl-[acyl-carrier-protein] dehydratase FabZ (150 aa).

The active site involves H54.

It belongs to the thioester dehydratase family. FabZ subfamily.

It is found in the cytoplasm. It carries out the reaction a (3R)-hydroxyacyl-[ACP] = a (2E)-enoyl-[ACP] + H2O. Its function is as follows. Involved in unsaturated fatty acids biosynthesis. Catalyzes the dehydration of short chain beta-hydroxyacyl-ACPs and long chain saturated and unsaturated beta-hydroxyacyl-ACPs. The sequence is that of 3-hydroxyacyl-[acyl-carrier-protein] dehydratase FabZ from Vibrio atlanticus (strain LGP32) (Vibrio splendidus (strain Mel32)).